Consider the following 171-residue polypeptide: 3-hydroxydecanoyl-[acyl-carrier-protein] dehydratase (171 aa).

Histidine 70 is a catalytic residue.

The protein belongs to the thioester dehydratase family. FabA subfamily. As to quaternary structure, homodimer.

It localises to the cytoplasm. It carries out the reaction a (3R)-hydroxyacyl-[ACP] = a (2E)-enoyl-[ACP] + H2O. The enzyme catalyses (3R)-hydroxydecanoyl-[ACP] = (2E)-decenoyl-[ACP] + H2O. It catalyses the reaction (2E)-decenoyl-[ACP] = (3Z)-decenoyl-[ACP]. Its pathway is lipid metabolism; fatty acid biosynthesis. Its function is as follows. Necessary for the introduction of cis unsaturation into fatty acids. Catalyzes the dehydration of (3R)-3-hydroxydecanoyl-ACP to E-(2)-decenoyl-ACP and then its isomerization to Z-(3)-decenoyl-ACP. Can catalyze the dehydratase reaction for beta-hydroxyacyl-ACPs with saturated chain lengths up to 16:0, being most active on intermediate chain length. The sequence is that of 3-hydroxydecanoyl-[acyl-carrier-protein] dehydratase from Xanthomonas euvesicatoria pv. vesicatoria (strain 85-10) (Xanthomonas campestris pv. vesicatoria).